Here is a 556-residue protein sequence, read N- to C-terminus: DNA ligase B (556 aa).

The active-site N6-AMP-lysine intermediate is K126.

This sequence belongs to the NAD-dependent DNA ligase family. LigB subfamily.

The enzyme catalyses NAD(+) + (deoxyribonucleotide)n-3'-hydroxyl + 5'-phospho-(deoxyribonucleotide)m = (deoxyribonucleotide)n+m + AMP + beta-nicotinamide D-nucleotide.. In terms of biological role, catalyzes the formation of phosphodiester linkages between 5'-phosphoryl and 3'-hydroxyl groups in double-stranded DNA using NAD as a coenzyme and as the energy source for the reaction. The protein is DNA ligase B of Stutzerimonas stutzeri (strain A1501) (Pseudomonas stutzeri).